A 77-amino-acid chain; its full sequence is Metallocarboxypeptidase inhibitor (77 aa).

The N-terminal stretch at 1–32 (MAQKFTILFTILLVVIAAQDVMAQDATLTKLF) is a signal peptide. The residue at position 33 (Gln33) is a Pyrrolidone carboxylic acid. 3 cysteine pairs are disulfide-bonded: Cys39/Cys55, Cys43/Cys58, and Cys49/Cys65. Residues 70–77 (GRAMAIGV) constitute a propeptide, hydrophobic peptide.

To potato MCPI. As to expression, ovaries.

Functionally, may play a defensive role against insect attacks. This is Metallocarboxypeptidase inhibitor from Solanum lycopersicum (Tomato).